Reading from the N-terminus, the 437-residue chain is GTPase Obg (437 aa).

An Obg domain is found at S2 to L160. The OBG-type G domain maps to A161–A338. GTP is bound by residues G167–S174, F192–T196, D214–G217, N284–D287, and S319–L321. Mg(2+)-binding residues include S174 and T194. In terms of domain architecture, OCT spans G359–D437.

Belongs to the TRAFAC class OBG-HflX-like GTPase superfamily. OBG GTPase family. As to quaternary structure, monomer. Mg(2+) is required as a cofactor.

It is found in the cytoplasm. Its function is as follows. An essential GTPase which binds GTP, GDP and possibly (p)ppGpp with moderate affinity, with high nucleotide exchange rates and a fairly low GTP hydrolysis rate. Plays a role in control of the cell cycle, stress response, ribosome biogenesis and in those bacteria that undergo differentiation, in morphogenesis control. This is GTPase Obg from Lactococcus lactis subsp. lactis (strain IL1403) (Streptococcus lactis).